Consider the following 470-residue polypeptide: 3-isopropylmalate dehydratase large subunit (470 aa).

Over residues 294–307 the composition is skewed to polar residues; that stretch reads PDQNTGISGSTPNP. A disordered region spans residues 294–313; it reads PDQNTGISGSTPNPSDAADD. 3 residues coordinate [4Fe-4S] cluster: Cys347, Cys407, and Cys410.

The protein belongs to the aconitase/IPM isomerase family. LeuC type 1 subfamily. In terms of assembly, heterodimer of LeuC and LeuD. Requires [4Fe-4S] cluster as cofactor.

It catalyses the reaction (2R,3S)-3-isopropylmalate = (2S)-2-isopropylmalate. It functions in the pathway amino-acid biosynthesis; L-leucine biosynthesis; L-leucine from 3-methyl-2-oxobutanoate: step 2/4. In terms of biological role, catalyzes the isomerization between 2-isopropylmalate and 3-isopropylmalate, via the formation of 2-isopropylmaleate. The polypeptide is 3-isopropylmalate dehydratase large subunit (Akkermansia muciniphila (strain ATCC BAA-835 / DSM 22959 / JCM 33894 / BCRC 81048 / CCUG 64013 / CIP 107961 / Muc)).